Reading from the N-terminus, the 648-residue chain is Protein associated with UVRAG as autophagy enhancer (648 aa).

Polar residues-rich tracts occupy residues Gln-131–Ser-146 and Pro-157–Arg-173. The interval Gln-131–Arg-173 is disordered. Ser-144 bears the Phosphoserine mark. The interaction with UVRAG stretch occupies residues Glu-183 to Glu-222. N6-acetyllysine occurs at positions 469, 509, 519, 559, and 619.

As to quaternary structure, interacts with UVRAG; the interaction is direct and promotes association with the PI3K/PI3KC3 and HOPS complexes. Interacts with STX17. Phosphorylated by MTOR at Ser-144 under nutrient-rich conditions. Phosphorylation prevents acetylation by KAT5/TIP60 and impairs RUBCNL/PACER function and autophagosome maturation. Under autophagy induction, Phosphorylation by MTOR is repressed, enabling acetylation by KAT5/TIP60. In terms of processing, acetylated by KAT5/TIP60 under autophagy induction, promoting autophagosome maturation and lipid metabolism. Acetylation is prevented by phosphorylation by MTOR. Lys-469 and Lys-559 constitute the key sites for tuning function in autophagy.

The protein localises to the cytoplasmic vesicle. Its subcellular location is the autophagosome membrane. Functionally, regulator of autophagy that promotes autophagosome maturation by facilitating the biogenesis of phosphatidylinositol 3-phosphate (PtdIns(3)P) in late steps of autophagy. Acts by antagonizing RUBCN, thereby stimulating phosphatidylinositol 3-kinase activity of the PI3K/PI3KC3 complex. Following anchorage to the autophagosomal SNARE STX17, promotes the recruitment of PI3K/PI3KC3 and HOPS complexes to the autophagosome to regulate the fusion specificity of autophagosomes with late endosomes/lysosomes. Binds phosphoinositides phosphatidylinositol 3-phosphate (PtdIns(3)P), 4-phosphate (PtdIns(4)P) and 5-phosphate (PtdIns(5)P). In addition to its role in autophagy, acts as a regulator of lipid and glycogen homeostasis. May act as a tumor suppressor. The protein is Protein associated with UVRAG as autophagy enhancer of Mus musculus (Mouse).